A 31-amino-acid polypeptide reads, in one-letter code: Cyclotide mden-L (31 aa).

The cyclopeptide (Gly-Asn) cross-link spans 1 to 31 (GSIPCGESCVYIPCISAVLGCSCKNKVCYRN). Disulfide bonds link cysteine 5/cysteine 21, cysteine 9/cysteine 23, and cysteine 14/cysteine 28.

The protein belongs to the cyclotide family. Bracelet subfamily. Post-translationally, this is a cyclic peptide.

Functionally, probably participates in a plant defense mechanism. In Melicytus dentatus (Tree violet), this protein is Cyclotide mden-L.